The following is a 371-amino-acid chain: Alanine dehydrogenase (371 aa).

Residues R15 and K75 each contribute to the substrate site. H96 serves as the catalytic Proton donor/acceptor. NAD(+) contacts are provided by residues S134, D198, R203, S220, 239–240 (VL), 267–270 (VAID), K279, and 298–301 (VANM). D270 serves as the catalytic Proton donor/acceptor.

Belongs to the AlaDH/PNT family. Mg(2+) is required as a cofactor.

It carries out the reaction L-alanine + NAD(+) + H2O = pyruvate + NH4(+) + NADH + H(+). It functions in the pathway amino-acid degradation; L-alanine degradation via dehydrogenase pathway; NH(3) and pyruvate from L-alanine: step 1/1. In terms of biological role, catalyzes the reversible reductive amination of pyruvate to L-alanine. The protein is Alanine dehydrogenase of Halomonas elongata (strain ATCC 33173 / DSM 2581 / NBRC 15536 / NCIMB 2198 / 1H9).